Reading from the N-terminus, the 342-residue chain is Phosphate acyltransferase (342 aa).

The protein belongs to the PlsX family. As to quaternary structure, homodimer. Probably interacts with PlsY.

The protein resides in the cytoplasm. It carries out the reaction a fatty acyl-[ACP] + phosphate = an acyl phosphate + holo-[ACP]. It participates in lipid metabolism; phospholipid metabolism. In terms of biological role, catalyzes the reversible formation of acyl-phosphate (acyl-PO(4)) from acyl-[acyl-carrier-protein] (acyl-ACP). This enzyme utilizes acyl-ACP as fatty acyl donor, but not acyl-CoA. The sequence is that of Phosphate acyltransferase from Shewanella woodyi (strain ATCC 51908 / MS32).